The sequence spans 165 residues: Phosphopantetheine adenylyltransferase (165 aa).

T9 contacts substrate. ATP-binding positions include 9–10 (TF) and H17. Substrate-binding residues include K41, L78, and R92. ATP-binding positions include 93 to 95 (GLR), E103, and 128 to 134 (RQAIASK).

This sequence belongs to the bacterial CoaD family. Homohexamer. It depends on Mg(2+) as a cofactor.

Its subcellular location is the cytoplasm. It carries out the reaction (R)-4'-phosphopantetheine + ATP + H(+) = 3'-dephospho-CoA + diphosphate. The protein operates within cofactor biosynthesis; coenzyme A biosynthesis; CoA from (R)-pantothenate: step 4/5. In terms of biological role, reversibly transfers an adenylyl group from ATP to 4'-phosphopantetheine, yielding dephospho-CoA (dPCoA) and pyrophosphate. This chain is Phosphopantetheine adenylyltransferase, found in Ruegeria pomeroyi (strain ATCC 700808 / DSM 15171 / DSS-3) (Silicibacter pomeroyi).